We begin with the raw amino-acid sequence, 682 residues long: Methionine--tRNA ligase (682 aa).

Residues 14-24 carry the 'HIGH' region motif; the sequence is PYANGSIHLGH. 4 residues coordinate Zn(2+): Cys-145, Cys-148, Cys-158, and Cys-161. The short motif at 331–335 is the 'KMSKS' region element; that stretch reads KMSKS. Lys-334 is a binding site for ATP. Residues 580-682 enclose the tRNA-binding domain; it reads AFAAIDLRVA…SGARPGQRIK (103 aa).

It belongs to the class-I aminoacyl-tRNA synthetase family. MetG type 1 subfamily. In terms of assembly, homodimer. Requires Zn(2+) as cofactor.

The protein resides in the cytoplasm. It catalyses the reaction tRNA(Met) + L-methionine + ATP = L-methionyl-tRNA(Met) + AMP + diphosphate. Functionally, is required not only for elongation of protein synthesis but also for the initiation of all mRNA translation through initiator tRNA(fMet) aminoacylation. The sequence is that of Methionine--tRNA ligase from Pseudomonas syringae pv. syringae (strain B728a).